A 736-amino-acid polypeptide reads, in one-letter code: Melanotransferrin (736 aa).

The N-terminal stretch at Met-1–Gly-19 is a signal peptide. 2 Transferrin-like domains span residues Val-23–Cys-357 and Leu-366–Ser-706. Disulfide bonds link Cys-26/Cys-63 and Cys-36/Cys-54. The Fe(3+) site is built by Asp-78 and Tyr-107. A glycan (N-linked (GlcNAc...) asparagine) is linked at Asn-118. Cystine bridges form between Cys-130–Cys-216, Cys-172–Cys-189, Cys-186–Cys-199, and Cys-257–Cys-271. Thr-132 contacts hydrogencarbonate. Asn-135 carries N-linked (GlcNAc...) asparagine glycosylation. The hydrogencarbonate site is built by Arg-136, Val-138, and Gly-139. Residue Tyr-210 coordinates Fe(3+). His-279 and Tyr-451 together coordinate Fe(3+). An N-linked (GlcNAc...) asparagine glycan is attached at Asn-515. His-625 lines the Fe(3+) pocket. Gly-711 is lipidated: GPI-anchor amidated glycine. A propeptide spans Ala-712 to Leu-736 (removed in mature form).

The protein belongs to the transferrin family.

It localises to the cell membrane. In terms of biological role, involved in iron cellular uptake. Seems to be internalized and then recycled back to the cell membrane. Binds a single atom of iron per subunit. Could also bind zinc. The sequence is that of Melanotransferrin from Oryctolagus cuniculus (Rabbit).